A 2151-amino-acid polypeptide reads, in one-letter code: Polycystin-1-like protein 3 (2151 aa).

The N-terminal stretch at 1-20 (MLLQRRSWLWLYIRIGVILG) is a signal peptide. Topologically, residues 25–1073 (RKPSIREQHG…IKLLLHVTNN (1049 aa)) are extracellular. Residues 34–142 (GGNSCYQLNR…CIEKHHFICQ (109 aa)) enclose the C-type lectin domain. 2 disulfides stabilise this stretch: C55–C141 and C116–C133. A glycan (N-linked (GlcNAc...) asparagine) is linked at N89. The segment covering 222 to 245 (SLTGRPQVTSDTLASSSPPQGTSD) has biased composition (polar residues). The interval 222–609 (SLTGRPQVTS…SSSPPWPVIT (388 aa)) is disordered. The span at 246–348 (TPASSSPPQV…ASSSPPQGTS (103 aa)) shows a compositional bias: low complexity. Polar residues-rich tracts occupy residues 349–363 (DTPA…TLDT) and 371–600 (QGTS…TPAS). 5 N-linked (GlcNAc...) asparagine glycosylation sites follow: N566, N579, N592, N913, and N951. The GAIN-B domain occupies 899–1061 (TSLNTSTDHF…FIVPRTVDVE (163 aa)). 2 cysteine pairs are disulfide-bonded: C1011/C1039 and C1026/C1041. The interval 1011–1061 (CYFWDRYNRTWKSDGCQVGPKSTILKTQCLCDHLTFFSSDFFIVPRTVDVE) is GPS. A stachel region spans residues 1045–1061 (TFFSSDFFIVPRTVDVE). A helical membrane pass occupies residues 1074 to 1094 (PVGVSLLSSLLGFYILLAMWA). Residues 1095 to 1283 (SRKDREDMQK…NQFTRVQRLS (189 aa)) lie on the Cytoplasmic side of the membrane. One can recognise a PLAT domain in the interval 1119–1236 (SHYLIQVYTG…GNCERDRVFT (118 aa)). The chain crosses the membrane as a helical span at residues 1284-1304 (CCMALLLCDMVINIMFWKMGG). Topologically, residues 1305-1320 (TTAKRGTEQLGPLAVT) are extracellular. A helical transmembrane segment spans residues 1321 to 1341 (LSELLVSIQTSIILFPIHLIF). The Cytoplasmic segment spans residues 1342-1533 (GRLFQLIHPP…FCLFRWLKCS (192 aa)). A helical membrane pass occupies residues 1534–1554 (CWLLLGVISLASAFFITLYSL). Topologically, residues 1555–1575 (ELDKDQATSWVISMMLSVLQD) are extracellular. A helical membrane pass occupies residues 1576–1596 (IFISQPIKVIFLTLLFSLMAN). At 1597–1665 (HMPWLNKDKE…KLTGGTLVQI (69 aa)) the chain is on the cytoplasmic side. Residues 1666-1676 (LFLTLLMTTVY) traverse the membrane as a helical segment. Residues 1677 to 1892 (SAKDSSRFFL…SLTSLQSSER (216 aa)) are Extracellular-facing. N-linked (GlcNAc) asparagine glycans are attached at residues N1712 and N1822. Residues 1893 to 1921 (GFAWIVSQVVYYLLVCYYAFIQGCRLKRQ) form a helical membrane-spanning segment. The Cytoplasmic segment spans residues 1922-1930 (RLAFFTRKR). Residues 1931 to 1949 (NLLDTSIVLISFSILGLSM) form a helical membrane-spanning segment. Residues 1950–1980 (QSLSLLHKKMQQYHCDRDRFISFYEALRVNS) are Extracellular-facing. The helical transmembrane segment at 1981-2002 (AVTHLRGFLLLFATVRVWDLLR) threads the bilayer. Over 2003–2019 (HHAQLQVINKTLSKAWD) the chain is Cytoplasmic. A helical membrane pass occupies residues 2020-2044 (EVLGFILIIVVLLSSYAMTFNLLFG). The channel pore-region stretch occupies residues 2043–2081 (FGWSISDYQSFFRSIVTVVGLLMGTSKHKEVIALYPILG). Over 2045–2077 (WSISDYQSFFRSIVTVVGLLMGTSKHKEVIALY) the chain is Extracellular. Residues 2078 to 2097 (PILGSLLVLSSIILMGLVII) traverse the membrane as a helical segment. Residues 2098–2151 (NLFVSAILIAFGKERKACEKEATLTDMLLQKLSSLLGIRLHQNPSEEHADNTGY) are Cytoplasmic-facing.

The protein belongs to the polycystin family. As to quaternary structure, heterotetramer with PKD2L1, composed of 3 subunit of PKD2L1 and 1 subunit of PKD1L3. Autoproteolytically processed at the GPS region of the GAIN-B domain; this cleavage modulates receptor activity. As to expression, expressed in a subset of taste receptor cells (type III taste cells) distinct from those involved in bitter, sweet and umami taste. Expressed in circumvallate and foliate taste buds, but not in surrounding non-gustatory lingual epithelium cells. Expressed in testis.

Its subcellular location is the cell membrane. The catalysed reaction is Ca(2+)(in) = Ca(2+)(out). It catalyses the reaction Na(+)(in) = Na(+)(out). The enzyme catalyses K(+)(in) = K(+)(out). It carries out the reaction Mg(2+)(in) = Mg(2+)(out). Its activity is regulated as follows. The non-selective cation channel is gated following an off-response property by acid: gated open after the removal of acid stimulus, but not during acid application. Non-selective cation channel activity is inhibited by capsaicin. Regulation of non-selective cation channel activity by external Ca(2+) is bimodal, first sensitizing and subsequently inactivating the current. The apo (closed) heterotetramer has an asymmetric selectivity filter (SF) guarded by Lys-2069 in absence of Ca(2+). However, Ca(2+)-entrance to the SF vestibule is accompanied by a swing motion of Lys-2069 on PKD1L3. Pore-forming subunit of a heterotetrameric, non-selective cation channel that is permeable to Ca(2+). Also shows permeability towards NA(1+), K(+) and Mg(2+). Heterotetrameric complex channel is activated by external low pH and Ca(2+), but opens only when the extracellular pH rises again and after the removal of acid stimulus. May act as a sour taste receptor in gustatory cells; however, its contribution to sour taste perception is unclear in vivo and may be indirect. The chain is Polycystin-1-like protein 3 from Mus musculus (Mouse).